Consider the following 251-residue polypeptide: Probable transcriptional regulatory protein MMAR_2098 (251 aa).

This sequence belongs to the TACO1 family.

The protein resides in the cytoplasm. In Mycobacterium marinum (strain ATCC BAA-535 / M), this protein is Probable transcriptional regulatory protein MMAR_2098.